Here is a 269-residue protein sequence, read N- to C-terminus: Phosphoribosylformylglycinamidine synthase subunit PurQ (269 aa).

Residues 5–262 (VLVMSGYGIN…IESNLQIFKN (258 aa)) enclose the Glutamine amidotransferase type-1 domain. The active-site Nucleophile is cysteine 95. Catalysis depends on residues histidine 222, glutamate 224, and glutamate 232.

Part of the FGAM synthase complex composed of 1 PurL, 1 PurQ and 2 PurS subunits.

The protein resides in the cytoplasm. The enzyme catalyses N(2)-formyl-N(1)-(5-phospho-beta-D-ribosyl)glycinamide + L-glutamine + ATP + H2O = 2-formamido-N(1)-(5-O-phospho-beta-D-ribosyl)acetamidine + L-glutamate + ADP + phosphate + H(+). It carries out the reaction L-glutamine + H2O = L-glutamate + NH4(+). It participates in purine metabolism; IMP biosynthesis via de novo pathway; 5-amino-1-(5-phospho-D-ribosyl)imidazole from N(2)-formyl-N(1)-(5-phospho-D-ribosyl)glycinamide: step 1/2. Its function is as follows. Part of the phosphoribosylformylglycinamidine synthase complex involved in the purines biosynthetic pathway. Catalyzes the ATP-dependent conversion of formylglycinamide ribonucleotide (FGAR) and glutamine to yield formylglycinamidine ribonucleotide (FGAM) and glutamate. The FGAM synthase complex is composed of three subunits. PurQ produces an ammonia molecule by converting glutamine to glutamate. PurL transfers the ammonia molecule to FGAR to form FGAM in an ATP-dependent manner. PurS interacts with PurQ and PurL and is thought to assist in the transfer of the ammonia molecule from PurQ to PurL. The protein is Phosphoribosylformylglycinamidine synthase subunit PurQ of Methanococcus maripaludis (strain C5 / ATCC BAA-1333).